Here is a 764-residue protein sequence, read N- to C-terminus: Calpain-like protease palB/RIM13 (764 aa).

Residues 95-368 (GEFYPPLTVY…FKYFYINWNP (274 aa)) enclose the Calpain catalytic domain. Catalysis depends on residues cysteine 165, histidine 318, and asparagine 336.

This sequence belongs to the peptidase C2 family. PalB/RIM13 subfamily.

In terms of biological role, required for the proteolytic cleavage of the transcription factor RIM101 in response to alkaline ambient pH. The polypeptide is Calpain-like protease palB/RIM13 (Debaryomyces hansenii (strain ATCC 36239 / CBS 767 / BCRC 21394 / JCM 1990 / NBRC 0083 / IGC 2968) (Yeast)).